A 251-amino-acid chain; its full sequence is Pyridoxine 5'-phosphate synthase (251 aa).

Position 7 (Asn-7) interacts with 3-amino-2-oxopropyl phosphate. 9 to 10 (DH) contributes to the 1-deoxy-D-xylulose 5-phosphate binding site. Residue Arg-18 participates in 3-amino-2-oxopropyl phosphate binding. Catalysis depends on His-43, which acts as the Proton acceptor. Positions 45 and 50 each coordinate 1-deoxy-D-xylulose 5-phosphate. Glu-73 serves as the catalytic Proton acceptor. Thr-103 provides a ligand contact to 1-deoxy-D-xylulose 5-phosphate. The active-site Proton donor is His-197. 3-amino-2-oxopropyl phosphate is bound by residues Gly-198 and 219-220 (GH).

It belongs to the PNP synthase family. Homooctamer; tetramer of dimers.

It is found in the cytoplasm. It carries out the reaction 3-amino-2-oxopropyl phosphate + 1-deoxy-D-xylulose 5-phosphate = pyridoxine 5'-phosphate + phosphate + 2 H2O + H(+). It participates in cofactor biosynthesis; pyridoxine 5'-phosphate biosynthesis; pyridoxine 5'-phosphate from D-erythrose 4-phosphate: step 5/5. Catalyzes the complicated ring closure reaction between the two acyclic compounds 1-deoxy-D-xylulose-5-phosphate (DXP) and 3-amino-2-oxopropyl phosphate (1-amino-acetone-3-phosphate or AAP) to form pyridoxine 5'-phosphate (PNP) and inorganic phosphate. The sequence is that of Pyridoxine 5'-phosphate synthase from Caulobacter sp. (strain K31).